The primary structure comprises 892 residues: MAVERLSSNSEMKSLTGEEIRAAFLNFYAERGHEIVPSASLVPNDPTVLLTIAGMLPFKPVFLGHQDRPSARVTSCQKCIRTNDIENVGRTARHHTFFEMLGNFSFGDYFKKEAIQWAWELSINVFGLNPSHIVISIFREDDEAEQIWRDVIGVNPRRIIRMDEKDNFWSSGPTGPCGPCSELYYDFHPELGEEEIDLEDDTRFIEFYNLVFMQYNRNSSGTLTSLANCNIDTGMGLERMAQILQGVANNYETDLIYPLLEKIASLIDVQYEDLNATIKASFKVIGDHTRACVHLIGDGVSASNLGRGYVLRRLLRRVVRHGRLIGITKPFLVQIAEVAIELMQSAYPQLLERRQLIFKELQREETRFLETLEKGEKLLAELLSKAPSVITGEAAFELYDTYGFPVELTEEIAEENDLRVDMKGFKKAMDEQRRRAKSAAMTIDLTLQDTIDKVVSEVGETNFLGYQQLEQFSQVQAIVVNGVSSQECNVGDKIDIVLNMTPFYGEGGGQIGDRGIISSASSDDSECLIEIDSVRRVKGAFVHSGLVKNGVLTLGDNVQCTVDSFSRRCAQANHTATHLLQAALKKAVDSDITQAGSLVDFDRLRFDFHFVRPVSGAELEHIEKLINGWISEAHSLVISEMSINEAKRVGAIAMFGEKYGEVVRVVDVPGVSKELCGGTHVTNTAEIGLFKIVSETGIAAGIRRIEAIAGQGVLDYLNDRDGVVKILSERFKAQSNEIVDRVIALQDEVKSLTKLLVKAQDEVAFTKALSLKNKVVSLTNSQYLIERLDGVTGDAIQSVVKTLVDELGDNAAVVLAGMPDLNDQKKVILVAAFGSEIIAQGLHAGQFLGPIAEICGGGGGGRPNFAQAGGRDPTKLDDALDLAKERIIQSLD.

Zn(2+) is bound by residues His-574, His-578, Cys-676, and His-680.

The protein belongs to the class-II aminoacyl-tRNA synthetase family. Zn(2+) serves as cofactor.

It is found in the cytoplasm. The catalysed reaction is tRNA(Ala) + L-alanine + ATP = L-alanyl-tRNA(Ala) + AMP + diphosphate. Its function is as follows. Catalyzes the attachment of alanine to tRNA(Ala) in a two-step reaction: alanine is first activated by ATP to form Ala-AMP and then transferred to the acceptor end of tRNA(Ala). Also edits incorrectly charged Ser-tRNA(Ala) and Gly-tRNA(Ala) via its editing domain. The sequence is that of Alanine--tRNA ligase from Prochlorococcus marinus (strain SARG / CCMP1375 / SS120).